Consider the following 404-residue polypeptide: Exodeoxyribonuclease 7 large subunit (404 aa).

It belongs to the XseA family. As to quaternary structure, heterooligomer composed of large and small subunits.

The protein resides in the cytoplasm. It carries out the reaction Exonucleolytic cleavage in either 5'- to 3'- or 3'- to 5'-direction to yield nucleoside 5'-phosphates.. In terms of biological role, bidirectionally degrades single-stranded DNA into large acid-insoluble oligonucleotides, which are then degraded further into small acid-soluble oligonucleotides. This chain is Exodeoxyribonuclease 7 large subunit, found in Tropheryma whipplei (strain TW08/27) (Whipple's bacillus).